The chain runs to 435 residues: Bud site selection protein RAX1 (435 aa).

The Cytoplasmic portion of the chain corresponds to 1 to 297; it reads MKEELSKVSS…PFSNHTSISR (297 aa). The RGS domain maps to 159-248; sequence VDEIMKRRSQ…LEMDCFPKFL (90 aa). Phosphoserine is present on serine 167. The chain crosses the membrane as a helical span at residues 298-318; the sequence is IGFGLLWLGIGFWIGYVLIFL. Over 319 to 325 the chain is Extracellular; it reads AYSRAIR. The helical transmembrane segment at 326–346 threads the bilayer; it reads VVTVVPFTLGCYCIVCGMYQV. Residues 347 to 409 lie on the Cytoplasmic side of the membrane; that stretch reads DIVYSWFGVT…FTRQLLRKRG (63 aa). A helical transmembrane segment spans residues 410–430; it reads LWCLLLVVGATAAFTVIFSCV. The Extracellular segment spans residues 431–435; it reads PGRRV.

Forms an heterodimeric complex with RAX2. Also interacts with BUD8 and BUD9.

It is found in the cell membrane. The protein resides in the bud neck. It localises to the bud tip. Its function is as follows. Required for the establishment of the bipolar budding pattern. Involved in selecting bud sites at both the distal and proximal poles of daughter cells as well as near previously used division sites on mother cells. The RAX1-RAX2 complex performs the asymmetric localization of the two cortical landmarks, BUD8 and BUD9, at the distal and proximal poles, respectively. The polypeptide is Bud site selection protein RAX1 (Saccharomyces cerevisiae (strain ATCC 204508 / S288c) (Baker's yeast)).